Reading from the N-terminus, the 179-residue chain is TM2 domain-containing protein Y66D12A.21 (179 aa).

A signal peptide spans 1-18 (MRQLLLTLSLISVSASDA). The Extracellular segment spans residues 19-82 (TVKCDDLDPN…IFNRTVPSAC (64 aa)). The N-linked (GlcNAc...) asparagine glycan is linked to Asn75. A helical membrane pass occupies residues 83 to 105 (HYGAHVSYTTTVLLSIFLGFFGI). Residues 88-135 (VSYTTTVLLSIFLGFFGIDRIYLGYYALGLIKMFSLGGLFVFWLVDII) enclose the TM2 domain. Residues 106 to 109 (DRIY) are Cytoplasmic-facing. A helical transmembrane segment spans residues 110–132 (LGYYALGLIKMFSLGGLFVFWLV). Residues 133–179 (DIILISLQLLGPADGTAYAMAYYGPKAQMIRFDSHTNFSFYTCDGCL) are Extracellular-facing. An N-linked (GlcNAc...) asparagine glycan is attached at Asn169.

It belongs to the TM2 family.

It localises to the membrane. The polypeptide is TM2 domain-containing protein Y66D12A.21 (Caenorhabditis elegans).